The chain runs to 332 residues: MSTRKKKADAEVAQAATVAASPDIDVEELEGIGRVTGAKLKEKGYYTVRDVAYASVKELAEIVGSEERAQQIVEAARKMLGLHSFISALEVYERRKKIRRISTGVRALDELLGGGIETRAVTEVVGEFGSGKTQLCHQLAVMVQLPEDRGGLGAKAIYIDTENTFRPERIMQIAKARGLDPDQALNNIFYARAYSADHQMVLVEQAKSLIRQHNVALLVVDSVIAHFRAEFPGRENLAERQQKLNKHIADLLRLADAYDVAVVVTNQVMAQPDVFFGNPLRPAGGNILAHGATYRLWLRKSKENIRIAKIFDSPYHPEGEVSFRITEEGLVD.

126–133 (GEFGSGKT) contributes to the ATP binding site.

The protein belongs to the eukaryotic RecA-like protein family.

Involved in DNA repair and in homologous recombination. Binds and assemble on single-stranded DNA to form a nucleoprotein filament. Hydrolyzes ATP in a ssDNA-dependent manner and promotes DNA strand exchange between homologous DNA molecules. The sequence is that of DNA repair and recombination protein RadA from Pyrobaculum calidifontis (strain DSM 21063 / JCM 11548 / VA1).